The primary structure comprises 368 residues: WAT1-related protein At5g40240 (368 aa).

10 helical membrane passes run 18–38 (VVPF…NTLF), 50–70 (VFVF…SVIF), 82–102 (PLFF…IAGC), 111–131 (TLAS…AVIF), 142–162 (ATQA…VVVL), 194–214 (WIIG…WYIL), 226–246 (ITVV…VCLF), 260–280 (ISLA…ALTH), 292–312 (ISLF…IFLG), and 315–335 (LHLG…TVIW). EamA domains lie at 33–161 (GSNT…LVVV) and 208–334 (ISVW…YTVI).

This sequence belongs to the drug/metabolite transporter (DMT) superfamily. Plant drug/metabolite exporter (P-DME) (TC 2.A.7.4) family.

The protein resides in the membrane. The polypeptide is WAT1-related protein At5g40240 (Arabidopsis thaliana (Mouse-ear cress)).